A 478-amino-acid polypeptide reads, in one-letter code: Cytochrome c-552 (478 aa).

Residues 1-26 (MTRIKINARRIFSLLIPFFFFTSVHA) form the signal peptide. Heme c is bound at residue histidine 94. Residues cysteine 122, cysteine 125, and lysine 126 each contribute to the heme site. Heme c contacts are provided by cysteine 160, cysteine 163, histidine 164, cysteine 209, cysteine 212, and histidine 213. Positions 215, 216, 261, and 263 each coordinate Ca(2+). Residue tyrosine 216 participates in substrate binding. Histidine 264 is a substrate binding site. Heme c contacts are provided by histidine 275, cysteine 282, cysteine 285, histidine 286, histidine 301, cysteine 314, cysteine 317, histidine 318, and histidine 393.

The protein belongs to the cytochrome c-552 family. Ca(2+) serves as cofactor. The cofactor is heme c.

The protein localises to the periplasm. The enzyme catalyses 6 Fe(III)-[cytochrome c] + NH4(+) + 2 H2O = 6 Fe(II)-[cytochrome c] + nitrite + 8 H(+). It functions in the pathway nitrogen metabolism; nitrate reduction (assimilation). Catalyzes the reduction of nitrite to ammonia, consuming six electrons in the process. This Escherichia coli O9:H4 (strain HS) protein is Cytochrome c-552.